A 274-amino-acid polypeptide reads, in one-letter code: 3-methyl-2-oxobutanoate hydroxymethyltransferase (274 aa).

2 residues coordinate Mg(2+): D49 and D88. 3-methyl-2-oxobutanoate contacts are provided by residues 49–50 (DS), D88, and K118. E120 contacts Mg(2+). E187 functions as the Proton acceptor in the catalytic mechanism.

This sequence belongs to the PanB family. As to quaternary structure, homodecamer; pentamer of dimers. Mg(2+) is required as a cofactor.

It localises to the cytoplasm. The enzyme catalyses 3-methyl-2-oxobutanoate + (6R)-5,10-methylene-5,6,7,8-tetrahydrofolate + H2O = 2-dehydropantoate + (6S)-5,6,7,8-tetrahydrofolate. Its pathway is cofactor biosynthesis; (R)-pantothenate biosynthesis; (R)-pantoate from 3-methyl-2-oxobutanoate: step 1/2. Catalyzes the reversible reaction in which hydroxymethyl group from 5,10-methylenetetrahydrofolate is transferred onto alpha-ketoisovalerate to form ketopantoate. In Rhodopseudomonas palustris (strain BisB18), this protein is 3-methyl-2-oxobutanoate hydroxymethyltransferase.